A 204-amino-acid chain; its full sequence is Phosphoprotein p30 (204 aa).

It belongs to the asfivirus phosphoprotein p30 family. As to quaternary structure, oligomer. Interacts with host HNRNPK. In terms of processing, phosphorylated on serine residues in the 115 N-terminal amino acids.

It localises to the host cytoplasm. It is found in the host nucleus. The protein resides in the virion. Its function is as follows. Modifies the subcellular distribution of heterogeneous nuclear ribonucleoprotein K (HNRNPK) and may contribute to modulate HNRNPK functions related to processing and export of mRNAs during ASFV infection. Necessary for virus internalization. The chain is Phosphoprotein p30 from African swine fever virus (strain Badajoz 1971 Vero-adapted) (Ba71V).